Here is a 159-residue protein sequence, read N- to C-terminus: Large ribosomal subunit protein uL11 (159 aa).

The protein belongs to the universal ribosomal protein uL11 family. In terms of assembly, part of the ribosomal stalk of the 50S ribosomal subunit. Interacts with L10 and the large rRNA to form the base of the stalk. L10 forms an elongated spine to which L12 dimers bind in a sequential fashion forming a multimeric L10(L12)X complex.

Functionally, forms part of the ribosomal stalk which helps the ribosome interact with GTP-bound translation factors. The sequence is that of Large ribosomal subunit protein uL11 from Methanococcus maripaludis (strain C6 / ATCC BAA-1332).